Reading from the N-terminus, the 1400-residue chain is Tiny macrocysts protein C (1400 aa).

Transmembrane regions (helical) follow at residues 59–79 (ILTI…GFKQ), 112–132 (IFFW…WYVA), 152–172 (FVST…LIGL), 196–216 (ANLS…IVGF), 240–260 (FDVY…LVDF), 266–286 (SIVY…ILPY), 296–316 (SGFY…MGIN), and 320–340 (TATT…IGYF). 2 disordered regions span residues 367–393 (FNEI…SKVT) and 683–712 (ERSG…RGKY). Basic and acidic residues predominate over residues 369–386 (EITKNEKSKTGDSKEKES). Transmembrane regions (helical) follow at residues 726–746 (WLMI…LIVL), 975–995 (TMLY…AVLF), 1162–1182 (VLAI…TYSV), and 1342–1362 (VLTS…LLLF).

It is found in the membrane. The chain is Tiny macrocysts protein C (tmcC) from Dictyostelium discoideum (Social amoeba).